The primary structure comprises 446 residues: tRNA-2-methylthio-N(6)-dimethylallyladenosine synthase (446 aa).

The 121-residue stretch at 2-122 (KKAYVKSYGC…LPDLLRQSRE (121 aa)) folds into the MTTase N-terminal domain. C11, C47, C85, C157, C161, and C164 together coordinate [4Fe-4S] cluster. Positions 143 to 375 (RNRGVTGFLT…QQLLDQQRHA (233 aa)) constitute a Radical SAM core domain. Residues 378 to 440 (AAAVGTVAEI…SNSLFGEVLE (63 aa)) enclose the TRAM domain.

Belongs to the methylthiotransferase family. MiaB subfamily. Monomer. It depends on [4Fe-4S] cluster as a cofactor.

It localises to the cytoplasm. The catalysed reaction is N(6)-dimethylallyladenosine(37) in tRNA + (sulfur carrier)-SH + AH2 + 2 S-adenosyl-L-methionine = 2-methylsulfanyl-N(6)-dimethylallyladenosine(37) in tRNA + (sulfur carrier)-H + 5'-deoxyadenosine + L-methionine + A + S-adenosyl-L-homocysteine + 2 H(+). Catalyzes the methylthiolation of N6-(dimethylallyl)adenosine (i(6)A), leading to the formation of 2-methylthio-N6-(dimethylallyl)adenosine (ms(2)i(6)A) at position 37 in tRNAs that read codons beginning with uridine. This chain is tRNA-2-methylthio-N(6)-dimethylallyladenosine synthase, found in Methylorubrum populi (strain ATCC BAA-705 / NCIMB 13946 / BJ001) (Methylobacterium populi).